A 100-amino-acid polypeptide reads, in one-letter code: uncharacterized protein (100 aa).

An N-terminal signal peptide occupies residues 1–23; sequence MKYVALAFVLSLVILQISAQVGA.

In terms of tissue distribution, nacreous layer of shell (at protein level). Expressed primarily in the mantle with highest level in the mantle pallium and lower level in the mantle edge.

The protein resides in the secreted. This is an uncharacterized protein from Margaritifera margaritifera (Freshwater pearl mussel).